Consider the following 284-residue polypeptide: Tropomyosin (284 aa).

Residues 1–284 (MEAIKNKMQA…DQTFAELTGY (284 aa)) adopt a coiled-coil conformation. Residues 22–43 (AEIAEQKSRDANLRAEKSEEEV) form a disordered region.

Belongs to the tropomyosin family. As to quaternary structure, homodimer.

Functionally, tropomyosin, in association with the troponin complex, plays a central role in the calcium dependent regulation of muscle contraction. The sequence is that of Tropomyosin from Lepidoglyphus destructor (Storage mite).